The following is a 1521-amino-acid chain: Probable DNA topoisomerase 2 (1521 aa).

The segment covering 1–10 (MSDSENDYSD) has biased composition (acidic residues). Residues 1–87 (MSDSENDYSD…DDKSSSSDNE (87 aa)) form a disordered region. Positions 36 to 48 (SKKKASATRKPAA) are enriched in basic residues. Over residues 49–62 (KKATTTTTSTTKKS) the composition is skewed to low complexity. ATP contacts are provided by residues asparagine 163, asparagine 192, 220 to 222 (SSH), and 233 to 240 (GRNGFGAK). Residues 412 to 414 (NKK) are interaction with DNA. An ATP-binding site is contributed by 446 to 448 (QTK). The 114-residue stretch at 527–640 (CTLILTEGDS…TLLRMPGFLV (114 aa)) folds into the Toprim domain. Mg(2+) contacts are provided by glutamate 533, aspartate 609, and aspartate 611. The region spanning 771 to 1273 (IPNIVDGLKT…PIQEIYKRDL (503 aa)) is the Topo IIA-type catalytic domain. Tyrosine 861 (O-(5'-phospho-DNA)-tyrosine intermediate) is an active-site residue. Positions 1007–1047 (GTRKKKKEEKEKKAASRKGTKAKPTTTKRSKRVDDDDDNEK) are disordered. A compositionally biased stretch (basic residues) spans 1021 to 1037 (ASRKGTKAKPTTTKRSK). The segment at 1085-1094 (KLVSTINETN) is interaction with DNA. Disordered regions lie at residues 1192 to 1222 (KIKK…EQDD) and 1335 to 1521 (IPTT…SDSD). Residues 1201 to 1222 (DEEDAAISSDEEKDGAQEEQDD) show a composition bias toward acidic residues. Residues 1354–1368 (TTSTSTSTTTSSNTK) are compositionally biased toward low complexity. Residues 1422 to 1438 (LSDESDQESDQESDQGS) show a composition bias toward acidic residues. Over residues 1454-1467 (PTTIATKKATTSKS) the composition is skewed to low complexity. The span at 1468–1480 (KVIDDKSSDDEVI) shows a compositional bias: basic and acidic residues. Positions 1503–1521 (SDSDDDDLYDNEESSSDSD) are enriched in acidic residues.

Belongs to the type II topoisomerase family. Homodimer. Requires Mg(2+) as cofactor. Mn(2+) serves as cofactor. The cofactor is Ca(2+).

Its subcellular location is the nucleus. The catalysed reaction is ATP-dependent breakage, passage and rejoining of double-stranded DNA.. Control of topological states of DNA by transient breakage and subsequent rejoining of DNA strands. Topoisomerase II makes double-strand breaks. The polypeptide is Probable DNA topoisomerase 2 (top2) (Dictyostelium discoideum (Social amoeba)).